Here is a 2230-residue protein sequence, read N- to C-terminus: DNA polymerase epsilon catalytic subunit A (2230 aa).

A compositionally biased stretch (polar residues) spans 1-19; that stretch reads MPTRQPSKYGNKFRSSSAS. Positions 1-24 are disordered; the sequence is MPTRQPSKYGNKFRSSSASFKPKR. Cys2101, Cys2104, Cys2136, and Cys2139 together coordinate Zn(2+). The segment at 2101–2139 adopts a CysA-type zinc-finger fold; the sequence is CNACCLIRDLDLCRDEDVLPEMGSDPNKAAPKPWRCPFC. [4Fe-4S] cluster-binding residues include Cys2170, Cys2173, Cys2185, and Cys2187. Positions 2170 to 2187 match the CysB motif motif; it reads CSKCGGLKISDFMEHCSC.

It belongs to the DNA polymerase type-B family. As to quaternary structure, heterotetramer. Consists of 4 subunits: pol2, dpb2, dpb3 and dpb4. Requires [4Fe-4S] cluster as cofactor.

It localises to the nucleus. The catalysed reaction is DNA(n) + a 2'-deoxyribonucleoside 5'-triphosphate = DNA(n+1) + diphosphate. Its function is as follows. DNA polymerase II participates in chromosomal DNA replication. This is DNA polymerase epsilon catalytic subunit A (pol2) from Aspergillus fumigatus (strain ATCC MYA-4609 / CBS 101355 / FGSC A1100 / Af293) (Neosartorya fumigata).